Consider the following 184-residue polypeptide: Cysteine-rich atrial secretory protein (184 aa).

The first 26 residues, 1–26 (MATFQAHFFAAVMCVGVLGLSKLCGA), serve as a signal peptide directing secretion. Cystine bridges form between Cys-29–Cys-34, Cys-65–Cys-111, Cys-75–Cys-82, Cys-123–Cys-155, and Cys-135–Cys-144. N-linked (GlcNAc...) asparagine glycosylation occurs at Asn-74.

In terms of processing, N-glycosylated. Highly expressed in atrium. Moderately expressed in the pericardium, pulmonary vein, nephridium, arteria anterior, ovotestis and connective tissue. Low expression found in intestine, lung plexus, diaphragm, subesophageal ganglion, ventricle and digestive gland. Very low expression found in columellar retractor, pedal nerves and cerebral ganglion. Not expressed in hemocytes.

The protein localises to the secreted. The sequence is that of Cysteine-rich atrial secretory protein from Achatina achatina (Giant Ghana snail).